Here is a 104-residue protein sequence, read N- to C-terminus: MASTQKIRIRLKSYDHRLIDASAKQIVETAKRAGAQVKGPIPLPVKKEIYTVLISPHVNKDARDQYEMRTHKRIMDIIDPTDKTVDALMKLDLAAGVDVKIELQ.

It belongs to the universal ribosomal protein uS10 family. As to quaternary structure, part of the 30S ribosomal subunit.

Involved in the binding of tRNA to the ribosomes. This Dichelobacter nodosus (strain VCS1703A) protein is Small ribosomal subunit protein uS10.